The sequence spans 442 residues: Probable D-serine dehydratase (442 aa).

At Lys-115 the chain carries N6-(pyridoxal phosphate)lysine.

This sequence belongs to the serine/threonine dehydratase family. DsdA subfamily. Pyridoxal 5'-phosphate serves as cofactor.

It catalyses the reaction D-serine = pyruvate + NH4(+). The sequence is that of Probable D-serine dehydratase from Halalkalibacterium halodurans (strain ATCC BAA-125 / DSM 18197 / FERM 7344 / JCM 9153 / C-125) (Bacillus halodurans).